The chain runs to 505 residues: MEMEIKDENLRNSVPFVRQLSTDSVKTKTEYDNEDGTPYKSTTQKLFLWTQLLAAFAVSVGSMNVGFSSGYTSPAVLTMNITLDITKEEITWVGGLMPLAALVGGIVGGPLIEYLGRKKTIMGTAVPFTIGWMLIANAINVVMVFAGRVICGVCVGIVSLAFPVYIGETIQPEVRGALGLLPTAFGNTGILLAFLVGSYLDWSNLAFFGAAIPVPFFLLMILTPETPRWYVSKARVQEARKSLRWLRGKNVNIEKEMRDLTISQTESDRTGGNAFKQLFSKRYLPAVMISLGLMLFQQLTGINAVIFYAASIFQMSGSSVDENLASIIIGVVNFISTFIATMLIDRLGRKVLLYISSVAMITTLLALGAYFYLKQNHIDVTAYGWLPLACLVIYVLGFSIGFGPIPWLMLGEILPSKIRGTAASLATGFNWTCTFIVTKTFQNIIDAIYMHGTLWLFAVICIGGLLFVIFFVPETKGKSLEEIEMKLTSGSRRVRNISKQPENIC.

Topologically, residues 1 to 46 are cytoplasmic; the sequence is MEMEIKDENLRNSVPFVRQLSTDSVKTKTEYDNEDGTPYKSTTQKL. The chain crosses the membrane as a helical span at residues 47–67; it reads FLWTQLLAAFAVSVGSMNVGF. The Extracellular portion of the chain corresponds to 68 to 91; it reads SSGYTSPAVLTMNITLDITKEEIT. The N-linked (GlcNAc...) asparagine glycan is linked to N80. Residues 92-112 form a helical membrane-spanning segment; sequence WVGGLMPLAALVGGIVGGPLI. At 113-124 the chain is on the cytoplasmic side; it reads EYLGRKKTIMGT. Residues 125–145 form a helical membrane-spanning segment; it reads AVPFTIGWMLIANAINVVMVF. The Extracellular segment spans residues 146-149; that stretch reads AGRV. Residues 150–170 traverse the membrane as a helical segment; the sequence is ICGVCVGIVSLAFPVYIGETI. The Cytoplasmic portion of the chain corresponds to 171 to 175; sequence QPEVR. A helical transmembrane segment spans residues 176–196; that stretch reads GALGLLPTAFGNTGILLAFLV. Residues 197–201 lie on the Extracellular side of the membrane; the sequence is GSYLD. A helical membrane pass occupies residues 202-222; the sequence is WSNLAFFGAAIPVPFFLLMIL. Residues 223–286 lie on the Cytoplasmic side of the membrane; it reads TPETPRWYVS…QLFSKRYLPA (64 aa). A helical membrane pass occupies residues 287–307; it reads VMISLGLMLFQQLTGINAVIF. Residues 308 to 323 are Extracellular-facing; sequence YAASIFQMSGSSVDEN. A helical membrane pass occupies residues 324–344; it reads LASIIIGVVNFISTFIATMLI. The Cytoplasmic segment spans residues 345–350; sequence DRLGRK. The helical transmembrane segment at 351–371 threads the bilayer; sequence VLLYISSVAMITTLLALGAYF. The Extracellular segment spans residues 372–390; that stretch reads YLKQNHIDVTAYGWLPLAC. The chain crosses the membrane as a helical span at residues 391–411; the sequence is LVIYVLGFSIGFGPIPWLMLG. The Cytoplasmic segment spans residues 412–419; sequence EILPSKIR. A helical membrane pass occupies residues 420–437; it reads GTAASLATGFNWTCTFIV. Topologically, residues 438–451 are extracellular; the sequence is TKTFQNIIDAIYMH. Residues 452–472 form a helical membrane-spanning segment; it reads GTLWLFAVICIGGLLFVIFFV. Residues 473–505 are Cytoplasmic-facing; that stretch reads PETKGKSLEEIEMKLTSGSRRVRNISKQPENIC.

Belongs to the major facilitator superfamily. Sugar transporter (TC 2.A.1.1) family. Trehalose transporter subfamily. In terms of tissue distribution, expressed in many larval tissues at a low level, moderate levels of expression are seen in testis and head and highest expression in muscle.

The protein localises to the cell membrane. High-capacity facilitative transporter for trehalose. Does not transport maltose, sucrose or lactose. Mediates the bidirectional transfer of trehalose. Responsible for the transport of trehalose synthesized in the fat body and the incorporation of trehalose into other tissues that require a carbon source, thereby regulating trehalose levels in the hemolymph. The protein is Facilitated trehalose transporter Tret1 of Bombyx mori (Silk moth).